The following is a 383-amino-acid chain: Lipid-A-disaccharide synthase (383 aa).

Belongs to the LpxB family.

The enzyme catalyses a lipid X + a UDP-2-N,3-O-bis[(3R)-3-hydroxyacyl]-alpha-D-glucosamine = a lipid A disaccharide + UDP + H(+). The protein operates within bacterial outer membrane biogenesis; LPS lipid A biosynthesis. In terms of biological role, condensation of UDP-2,3-diacylglucosamine and 2,3-diacylglucosamine-1-phosphate to form lipid A disaccharide, a precursor of lipid A, a phosphorylated glycolipid that anchors the lipopolysaccharide to the outer membrane of the cell. The protein is Lipid-A-disaccharide synthase of Anaeromyxobacter dehalogenans (strain 2CP-1 / ATCC BAA-258).